The following is a 227-amino-acid chain: Cytochrome c oxidase subunit 2 (227 aa).

The Mitochondrial intermembrane portion of the chain corresponds to 1 to 14; the sequence is MACPVQLGFQDAAS. A helical membrane pass occupies residues 15–45; sequence PIMEELTYFHDHTLMIVFLISSLVLYIISLM. Residues 46-59 are Mitochondrial matrix-facing; the sequence is LTTELTHTSTMDAQ. The chain crosses the membrane as a helical span at residues 60-87; it reads EVETVWTILPAVILILIALPSLRILYMM. At 88–227 the chain is on the mitochondrial intermembrane side; it reads DEITTPSLTL…HFEEWLLAML (140 aa). Positions 161, 196, 198, 200, 204, and 207 each coordinate Cu cation. Position 198 (Glu198) interacts with Mg(2+).

This sequence belongs to the cytochrome c oxidase subunit 2 family. Component of the cytochrome c oxidase (complex IV, CIV), a multisubunit enzyme composed of 14 subunits. The complex is composed of a catalytic core of 3 subunits MT-CO1, MT-CO2 and MT-CO3, encoded in the mitochondrial DNA, and 11 supernumerary subunits COX4I, COX5A, COX5B, COX6A, COX6B, COX6C, COX7A, COX7B, COX7C, COX8 and NDUFA4, which are encoded in the nuclear genome. The complex exists as a monomer or a dimer and forms supercomplexes (SCs) in the inner mitochondrial membrane with NADH-ubiquinone oxidoreductase (complex I, CI) and ubiquinol-cytochrome c oxidoreductase (cytochrome b-c1 complex, complex III, CIII), resulting in different assemblies (supercomplex SCI(1)III(2)IV(1) and megacomplex MCI(2)III(2)IV(2)). Found in a complex with TMEM177, COA6, COX18, COX20, SCO1 and SCO2. Interacts with TMEM177 in a COX20-dependent manner. Interacts with COX20. Interacts with COX16. Cu cation serves as cofactor.

The protein resides in the mitochondrion inner membrane. It catalyses the reaction 4 Fe(II)-[cytochrome c] + O2 + 8 H(+)(in) = 4 Fe(III)-[cytochrome c] + 2 H2O + 4 H(+)(out). Component of the cytochrome c oxidase, the last enzyme in the mitochondrial electron transport chain which drives oxidative phosphorylation. The respiratory chain contains 3 multisubunit complexes succinate dehydrogenase (complex II, CII), ubiquinol-cytochrome c oxidoreductase (cytochrome b-c1 complex, complex III, CIII) and cytochrome c oxidase (complex IV, CIV), that cooperate to transfer electrons derived from NADH and succinate to molecular oxygen, creating an electrochemical gradient over the inner membrane that drives transmembrane transport and the ATP synthase. Cytochrome c oxidase is the component of the respiratory chain that catalyzes the reduction of oxygen to water. Electrons originating from reduced cytochrome c in the intermembrane space (IMS) are transferred via the dinuclear copper A center (CU(A)) of subunit 2 and heme A of subunit 1 to the active site in subunit 1, a binuclear center (BNC) formed by heme A3 and copper B (CU(B)). The BNC reduces molecular oxygen to 2 water molecules using 4 electrons from cytochrome c in the IMS and 4 protons from the mitochondrial matrix. The sequence is that of Cytochrome c oxidase subunit 2 (MT-CO2) from Cheirogaleus medius (Fat-tailed dwarf lemur).